The sequence spans 23 residues: Large ribosomal subunit protein uL10 (23 aa).

This sequence belongs to the universal ribosomal protein uL10 family. In terms of assembly, part of the ribosomal stalk of the 50S ribosomal subunit. The N-terminus interacts with L11 and the large rRNA to form the base of the stalk. The C-terminus forms an elongated spine to which L12 dimers bind in a sequential fashion forming a multimeric L10(L12)X complex.

Forms part of the ribosomal stalk, playing a central role in the interaction of the ribosome with GTP-bound translation factors. The polypeptide is Large ribosomal subunit protein uL10 (rplJ) (Klebsiella pneumoniae).